The following is a 103-amino-acid chain: Large ribosomal subunit protein bL21 (103 aa).

Belongs to the bacterial ribosomal protein bL21 family. As to quaternary structure, part of the 50S ribosomal subunit. Contacts protein L20.

This protein binds to 23S rRNA in the presence of protein L20. This is Large ribosomal subunit protein bL21 from Salmonella schwarzengrund (strain CVM19633).